The primary structure comprises 349 residues: Soluble TNF receptor II (349 aa).

Positions 1 to 19 (MRSVLYSYILFLSCIIING) are cleaved as a signal peptide. 2 TNFR-Cys repeats span residues 31 to 65 (KCKDNEYRSRNLCCLSCPPGTYASRLCDSKTNTQC) and 67 to 108 (PCGS…NRIC). 6 disulfide bridges follow: C32–C43, C44–C57, C47–C65, C68–C83, C86–C100, and C90–C108. N-linked (GlcNAc...) asparagine; by host glycans are attached at residues N101, N190, N249, N277, and N313.

The protein belongs to the orthopoxvirus OPG002 family.

The protein resides in the secreted. In terms of biological role, inhibits host immune defense by binding to host TNF and various chemokines in the extracellular space. Binds host CC chemokines (beta chemokines) and CXC chemokines (alpha chemokines). In Monkeypox virus, this protein is Soluble TNF receptor II (OPG002).